The primary structure comprises 375 residues: Tryptophan--tRNA ligase (375 aa).

The short motif at 81–89 (PSGPVHIGH) is the 'HIGH' region element. The 'KMSKS' region motif lies at 258-262 (KMSAS).

It belongs to the class-I aminoacyl-tRNA synthetase family.

The protein localises to the cytoplasm. It catalyses the reaction tRNA(Trp) + L-tryptophan + ATP = L-tryptophyl-tRNA(Trp) + AMP + diphosphate + H(+). This chain is Tryptophan--tRNA ligase, found in Pyrobaculum aerophilum (strain ATCC 51768 / DSM 7523 / JCM 9630 / CIP 104966 / NBRC 100827 / IM2).